The chain runs to 468 residues: FAD-linked oxidoreductase hasG (468 aa).

Residues 37 to 211 enclose the FAD-binding PCMH-type domain; sequence LGKIPAAVVQ…VEATFRAYPW (175 aa).

It belongs to the oxygen-dependent FAD-linked oxidoreductase family. The cofactor is FAD.

Its pathway is secondary metabolite biosynthesis. FAD-linked oxidoreductase; part of the gene cluster that mediates the biosynthesis of hexadehydro-astechrome (HAS), a tryptophan-derived iron(III)-complex that acts as a virulence factor in infected mice. Within the pathway, hasG converts the prenyl to a methylbutadienyl side chain. The HAS biosynthesis begins with the synthesis of a tethered Trp-Ala dipeptide by the NRPS hasD. The 7-dimethylallyltryptophan synthase hasE then catalyzes the prenylation of the hasD-tethered tryptophan or the resulting tethered Trp-Ala dipeptide at the C-7 position of the indole moiety. HAS biosynthesis continues via tethered intermediates with the succesive actions of the cytochrome P450 monooxygenase hasH, the O-methyltransferase hasC, and the FAD-linked oxidoreductase hasG. The resulting O-methylated diketopiperazine is then released from hasD. Finally, three O-methylated diketopiperazine molecules assemble in a trimeric complex with Fe(III) to produce hexadehydro-astechrome. The sequence is that of FAD-linked oxidoreductase hasG from Aspergillus fumigatus (strain CBS 144.89 / FGSC A1163 / CEA10) (Neosartorya fumigata).